The following is a 276-amino-acid chain: MIFNENTPNFIDFKESFKELPLSDETFKIIEENGIKLREIAIGEFSGRDSVAAIIKAIEEGIDFVLPVVAFTGTDYGNINIFYKNWEIVNKRIKEIDKDKILLPLHFMFEPKLWNALNGRWVVLSFKRYGYYRPCIGCHAYLRIIRIPLAKHLGGKIISGERLYHNGDFKIDQIEEVLNVYSKICRDFDVELILPIRYIREGKKIKEIIGEEWEQGEKQFSCVFSGNYRDKDGKVIFDKEGILKMLNEFIYPASVEILKEGYKGNFNYLNIVKKLI.

This is an uncharacterized protein from Methanocaldococcus jannaschii (strain ATCC 43067 / DSM 2661 / JAL-1 / JCM 10045 / NBRC 100440) (Methanococcus jannaschii).